A 390-amino-acid polypeptide reads, in one-letter code: GTPase Obg (390 aa).

Positions 1–159 constitute an Obg domain; it reads MKFVDEASIL…RDLMLELMLL (159 aa). The segment at 127–147 is disordered; sequence NTRFKSSVNRTPRQKTMGTPG. The span at 129–143 shows a compositional bias: polar residues; that stretch reads RFKSSVNRTPRQKTM. Residues 160 to 333 form the OBG-type G domain; that stretch reads ADVGMLGMPN…LCWDVMTFII (174 aa). Residues 166–173, 191–195, 213–216, 283–286, and 314–316 each bind GTP; these read GMPNAGKS, FTTLV, DIPG, NKID, and SAA. Mg(2+) contacts are provided by Ser173 and Thr193.

The protein belongs to the TRAFAC class OBG-HflX-like GTPase superfamily. OBG GTPase family. In terms of assembly, monomer. The cofactor is Mg(2+).

It is found in the cytoplasm. An essential GTPase which binds GTP, GDP and possibly (p)ppGpp with moderate affinity, with high nucleotide exchange rates and a fairly low GTP hydrolysis rate. Plays a role in control of the cell cycle, stress response, ribosome biogenesis and in those bacteria that undergo differentiation, in morphogenesis control. The chain is GTPase Obg from Citrobacter koseri (strain ATCC BAA-895 / CDC 4225-83 / SGSC4696).